The chain runs to 511 residues: Endoglucanase B (511 aa).

The first 29 residues, 1–29 (MNLLSGWVRPLMLGCGLLGAALSAGSIQA), serve as a signal peptide directing secretion. The 101-residue stretch at 30–130 (AVCEYRVTNE…AVTGAICGGQ (101 aa)) folds into the CBM2 domain. An intrachain disulfide couples C32 to C127. Residues 137–173 (SVASSSSSSSVVSSTPRSSSSSVSSSVPGTSSSSSSS) are disordered. One can recognise a CBM10 domain in the interval 180-209 (ACNWYGTLTPLCNNTSNGWGYEDGRSCVAR). Disulfide bonds link C181-C212 and C191-C206. D276 serves as the catalytic Nucleophile. D393 acts as the Proton donor in catalysis.

This sequence belongs to the glycosyl hydrolase 45 (cellulase K) family.

It localises to the periplasm. The enzyme catalyses Endohydrolysis of (1-&gt;4)-beta-D-glucosidic linkages in cellulose, lichenin and cereal beta-D-glucans.. Functionally, this enzyme catalyzes the endohydrolysis of 1,4-beta-glucosidic linkages in cellulose, lichenin and cereal beta-D-glucans. EGB is most active against barley beta-glucan, but showed significant activity against amorphous and crystalline cellulose. In Cellvibrio japonicus (strain Ueda107) (Pseudomonas fluorescens subsp. cellulosa), this protein is Endoglucanase B (celB).